The sequence spans 294 residues: 4-hydroxy-tetrahydrodipicolinate synthase (294 aa).

Threonine 45 contacts pyruvate. Residue tyrosine 133 is the Proton donor/acceptor of the active site. The Schiff-base intermediate with substrate role is filled by lysine 162. Isoleucine 204 contributes to the pyruvate binding site.

Belongs to the DapA family. Homotetramer; dimer of dimers.

The protein resides in the cytoplasm. The enzyme catalyses L-aspartate 4-semialdehyde + pyruvate = (2S,4S)-4-hydroxy-2,3,4,5-tetrahydrodipicolinate + H2O + H(+). It participates in amino-acid biosynthesis; L-lysine biosynthesis via DAP pathway; (S)-tetrahydrodipicolinate from L-aspartate: step 3/4. With respect to regulation, is allosterically regulated by the feedback inhibitor (S)-lysine. Catalyzes the condensation of (S)-aspartate-beta-semialdehyde [(S)-ASA] and pyruvate to 4-hydroxy-tetrahydrodipicolinate (HTPA). The chain is 4-hydroxy-tetrahydrodipicolinate synthase from Agrobacterium fabrum (strain C58 / ATCC 33970) (Agrobacterium tumefaciens (strain C58)).